The primary structure comprises 147 residues: Lipoprotein signal peptidase (147 aa).

4 consecutive transmembrane segments (helical) span residues 10–30, 34–54, 59–79, and 87–107; these read ISIF…IKFL, GIVK…GTAF, FLGS…LVYM, and WFIY…RLIY. Catalysis depends on residues aspartate 112 and aspartate 130. The helical transmembrane segment at 121–141 threads the bilayer; it reads LHWPAFNVADSAISIGIVLFV.

This sequence belongs to the peptidase A8 family.

It localises to the cell inner membrane. The enzyme catalyses Release of signal peptides from bacterial membrane prolipoproteins. Hydrolyzes -Xaa-Yaa-Zaa-|-(S,diacylglyceryl)Cys-, in which Xaa is hydrophobic (preferably Leu), and Yaa (Ala or Ser) and Zaa (Gly or Ala) have small, neutral side chains.. It functions in the pathway protein modification; lipoprotein biosynthesis (signal peptide cleavage). This protein specifically catalyzes the removal of signal peptides from prolipoproteins. This is Lipoprotein signal peptidase from Thermodesulfovibrio yellowstonii (strain ATCC 51303 / DSM 11347 / YP87).